Consider the following 602-residue polypeptide: Glutathione-regulated potassium-efflux system protein KefB (602 aa).

The next 13 membrane-spanning stretches (helical) occupy residues 4-24 (TGLLTAVLVFLFAAVVAVPIA), 29-49 (IGAVLGYLIAGIAIGPWGLGF), 55-75 (EILHFSELGVVFLMFIIGLEL), 87-107 (IFGVGAGQVVITAAVLGALLY), 115-135 (AAVIGGVGLAMSSTAMALQLM), 152-172 (VLLFQDMAVIPALALIPILAG), 181-201 (VKIGLKIAAFAGMLIGGRYLL), 207-227 (YIVASGVREVFTAAALLVVLG), 230-250 (LFMDALGLSMALGTFIAGILL), 261-281 (IAIEPFKGLLLGLFFISVGMA), 296-318 (LGVLALVFIKSAILYGLARVFGL), 326-346 (FAGVLSQGGEFAFVLFSAAFS), and 356-376 (ALLLVVVTLSMMTTPLLMQVI). Residues 400 to 519 (DPQVIIVGFG…NGVKDFTRET (120 aa)) form the RCK N-terminal domain.

It belongs to the monovalent cation:proton antiporter 2 (CPA2) transporter (TC 2.A.37) family. KefB subfamily. As to quaternary structure, interacts with the regulatory subunit KefG.

The protein localises to the cell inner membrane. Pore-forming subunit of a potassium efflux system that confers protection against electrophiles. Catalyzes K(+)/H(+) antiport. The chain is Glutathione-regulated potassium-efflux system protein KefB from Yersinia pestis bv. Antiqua (strain Antiqua).